Reading from the N-terminus, the 282-residue chain is Trihydroxynaphthalene reductase PfmaI (282 aa).

The NADP(+) site is built by Ile-41, Asn-114, and Arg-147. Catalysis depends on proton donor residues Ser-164 and Tyr-178. NADP(+) is bound by residues Tyr-178, Lys-182, Ile-211, and Thr-213. Lys-182 acts as the Lowers pKa of active site Tyr in catalysis.

The protein belongs to the short-chain dehydrogenases/reductases (SDR) family.

Its pathway is pigment biosynthesis; melanin biosynthesis. In terms of biological role, trihydroxynaphthalene reductase involved the biosynthesis of dihydroxynaphthalene (DHN)-melanin, a bluish-green pigment forming a dark layer in the conidial wall that protects the conidia from UV radiations. The first step of the pathway is the production of the pentaketide 1,3,6,8-tetrahydroxynaphthalene (1,3,6,8-THN or T4HN) by the polyketide synthase PfmaE though condensation of acetyl-CoA with malonyl-CoA. T4HN is not stable and easily oxidizes into the stable form flaviolin. T4HN is also substrate of the hydroxynaphthalene reductase PfmaG to yield scytalone. The scytalone dehydratase PfmaJ then reduces scytalone to 1,3,8-THN. 1,3,8-THN is then substrate of the hydroxynaphthalene reductase PfmaI to yield vermelone. Vermelone is further converted by the multicopper oxidase PfmaD to 1,8-DHN. Finally the laccase PFICI_06862 transforms 1,8-DHN to DHN-melanin. The roles of the 5-oxoprolinase PfmaA and the proline iminopeptidase PfmaB within the cluster have not been elucidated yet. This chain is Trihydroxynaphthalene reductase PfmaI, found in Pestalotiopsis fici (strain W106-1 / CGMCC3.15140).